The sequence spans 319 residues: Glycine--tRNA ligase alpha subunit (319 aa).

Positions 290–319 (RQQQPEAPAPGPAAVVGGRDRKDACDVKEG) are disordered. A compositionally biased stretch (basic and acidic residues) spans 307 to 319 (GRDRKDACDVKEG).

The protein belongs to the class-II aminoacyl-tRNA synthetase family. As to quaternary structure, tetramer of two alpha and two beta subunits.

It localises to the cytoplasm. It carries out the reaction tRNA(Gly) + glycine + ATP = glycyl-tRNA(Gly) + AMP + diphosphate. The protein is Glycine--tRNA ligase alpha subunit of Moorella thermoacetica (strain ATCC 39073 / JCM 9320).